We begin with the raw amino-acid sequence, 138 residues long: Proofreading thioesterase EntH (138 aa).

Glu64 functions as the Nucleophile or proton acceptor in the catalytic mechanism.

The protein belongs to the thioesterase PaaI family. As to quaternary structure, homotetramer. Dimer of dimers. Interacts specifically with the aryl carrier protein (ArCP) domain of EntB.

The protein localises to the cytoplasm. It participates in siderophore biosynthesis; enterobactin biosynthesis. Its function is as follows. Required for optimal enterobactin synthesis. Acts as a proofreading enzyme that prevents EntB misacylation by hydrolyzing the thioester bound existing between EntB and wrongly charged molecules. The chain is Proofreading thioesterase EntH from Citrobacter rodentium (strain ICC168) (Citrobacter freundii biotype 4280).